A 158-amino-acid polypeptide reads, in one-letter code: Ribonuclease H (158 aa).

The RNase H type-1 domain maps to 1–147 (MKVTIYTDGA…CDVLATTAAD (147 aa)). Positions 8, 52, 74, and 139 each coordinate Mg(2+).

The protein belongs to the RNase H family. In terms of assembly, monomer. Requires Mg(2+) as cofactor.

It is found in the cytoplasm. It carries out the reaction Endonucleolytic cleavage to 5'-phosphomonoester.. In terms of biological role, endonuclease that specifically degrades the RNA of RNA-DNA hybrids. The sequence is that of Ribonuclease H from Lachnoclostridium phytofermentans (strain ATCC 700394 / DSM 18823 / ISDg) (Clostridium phytofermentans).